The chain runs to 605 residues: Elongation factor 4 (605 aa).

The region spanning 11–193 is the tr-type G domain; it reads KRIRNFSIIA…RIVTQISPPK (183 aa). GTP contacts are provided by residues 23–28 and 140–143; these read DHGKST and NKVD.

Belongs to the TRAFAC class translation factor GTPase superfamily. Classic translation factor GTPase family. LepA subfamily.

The protein localises to the cell membrane. The enzyme catalyses GTP + H2O = GDP + phosphate + H(+). Its function is as follows. Required for accurate and efficient protein synthesis under certain stress conditions. May act as a fidelity factor of the translation reaction, by catalyzing a one-codon backward translocation of tRNAs on improperly translocated ribosomes. Back-translocation proceeds from a post-translocation (POST) complex to a pre-translocation (PRE) complex, thus giving elongation factor G a second chance to translocate the tRNAs correctly. Binds to ribosomes in a GTP-dependent manner. This Phytoplasma australiense protein is Elongation factor 4.